The following is a 129-amino-acid chain: Cytochrome c oxidase subunit 5B, mitochondrial (129 aa).

A mitochondrion-targeting transit peptide spans 1–31; that stretch reads MASRLLRGVGALAAQALRAHGPRGVAATRSM. An N6-acetyllysine mark is found at K68 and K86. Residues C91, C93, C113, and C116 each coordinate Zn(2+). The residue at position 121 (K121) is an N6-acetyllysine.

It belongs to the cytochrome c oxidase subunit 5B family. In terms of assembly, component of the cytochrome c oxidase (complex IV, CIV), a multisubunit enzyme composed of 14 subunits. The complex is composed of a catalytic core of 3 subunits MT-CO1, MT-CO2 and MT-CO3, encoded in the mitochondrial DNA, and 11 supernumerary subunits COX4I, COX5A, COX5B, COX6A, COX6B, COX6C, COX7A, COX7B, COX7C, COX8 and NDUFA4, which are encoded in the nuclear genome. The complex exists as a monomer or a dimer and forms supercomplexes (SCs) in the inner mitochondrial membrane with NADH-ubiquinone oxidoreductase (complex I, CI) and ubiquinol-cytochrome c oxidoreductase (cytochrome b-c1 complex, complex III, CIII), resulting in different assemblies (supercomplex SCI(1)III(2)IV(1) and megacomplex MCI(2)III(2)IV(2)).

The protein localises to the mitochondrion inner membrane. It participates in energy metabolism; oxidative phosphorylation. Its function is as follows. Component of the cytochrome c oxidase, the last enzyme in the mitochondrial electron transport chain which drives oxidative phosphorylation. The respiratory chain contains 3 multisubunit complexes succinate dehydrogenase (complex II, CII), ubiquinol-cytochrome c oxidoreductase (cytochrome b-c1 complex, complex III, CIII) and cytochrome c oxidase (complex IV, CIV), that cooperate to transfer electrons derived from NADH and succinate to molecular oxygen, creating an electrochemical gradient over the inner membrane that drives transmembrane transport and the ATP synthase. Cytochrome c oxidase is the component of the respiratory chain that catalyzes the reduction of oxygen to water. Electrons originating from reduced cytochrome c in the intermembrane space (IMS) are transferred via the dinuclear copper A center (CU(A)) of subunit 2 and heme A of subunit 1 to the active site in subunit 1, a binuclear center (BNC) formed by heme A3 and copper B (CU(B)). The BNC reduces molecular oxygen to 2 water molecules using 4 electrons from cytochrome c in the IMS and 4 protons from the mitochondrial matrix. The polypeptide is Cytochrome c oxidase subunit 5B, mitochondrial (Cox5b) (Rattus norvegicus (Rat)).